We begin with the raw amino-acid sequence, 219 residues long: Glutathione S-transferase (219 aa).

Residues 2–89 form the GST N-terminal domain; sequence SQPILGYWDI…YLGRKYKLNG (88 aa). Glutathione is bound by residues 8-9, 44-47, lysine 51, 60-61, and 73-74; these read YW, RSEW, NL, and QT. The GST C-terminal domain occupies 91–207; sequence NDHEEIRISM…YIKKQQPKTF (117 aa). A substrate-binding site is contributed by tyrosine 117.

Belongs to the GST superfamily. Mu family. As to quaternary structure, homodimer.

The protein localises to the cytoplasm. It catalyses the reaction RX + glutathione = an S-substituted glutathione + a halide anion + H(+). This chain is Glutathione S-transferase, found in Dermatophagoides pteronyssinus (European house dust mite).